The chain runs to 151 residues: SsrA-binding protein (151 aa).

The disordered stretch occupies residues 124–151; sequence GKKLHDKRESEKERDWNRQKSRLLKAHG. Residues 129–141 show a composition bias toward basic and acidic residues; it reads DKRESEKERDWNR. Residues 142–151 show a composition bias toward basic residues; it reads QKSRLLKAHG.

It belongs to the SmpB family.

The protein resides in the cytoplasm. In terms of biological role, required for rescue of stalled ribosomes mediated by trans-translation. Binds to transfer-messenger RNA (tmRNA), required for stable association of tmRNA with ribosomes. tmRNA and SmpB together mimic tRNA shape, replacing the anticodon stem-loop with SmpB. tmRNA is encoded by the ssrA gene; the 2 termini fold to resemble tRNA(Ala) and it encodes a 'tag peptide', a short internal open reading frame. During trans-translation Ala-aminoacylated tmRNA acts like a tRNA, entering the A-site of stalled ribosomes, displacing the stalled mRNA. The ribosome then switches to translate the ORF on the tmRNA; the nascent peptide is terminated with the 'tag peptide' encoded by the tmRNA and targeted for degradation. The ribosome is freed to recommence translation, which seems to be the essential function of trans-translation. The chain is SsrA-binding protein from Rhizobium johnstonii (strain DSM 114642 / LMG 32736 / 3841) (Rhizobium leguminosarum bv. viciae).